Here is a 109-residue protein sequence, read N- to C-terminus: Preprofallaxidin-8 (109 aa).

A signal peptide spans 1 to 22 (MASLKKSLFLVLFLGLLSLSIC). The propeptide occupies 23–46 (EEQKRENEEDAEDENHEEESEEKR). Residues 27–46 (RENEEDAEDENHEEESEEKR) form a disordered region. Residues 30-42 (EEDAEDENHEEES) are compositionally biased toward acidic residues. At Leu-62 the chain carries Leucine amide. Residues 66–70 (SEEKR) constitute a propeptide that is removed on maturation. At Met-75 the chain carries Methionine amide. The propeptide occupies 79 to 83 (SEEKR). Met-88 carries the post-translational modification Methionine amide. Propeptides lie at residues 92-96 (SEEKR) and Ala-108.

It belongs to the frog skin active peptide (FSAP) family. Brevinin subfamily. In terms of tissue distribution, expressed by the skin glands.

The protein localises to the secreted. Fallaxidin-2.1 shows no antibacterial activity against Gram-positive or Gram-negative bacteria. Does not inhibit the formation of NO by neuronal nitric oxide synthase. Has no effect on splenocyte proliferation or smooth muscle contraction. In terms of biological role, fallaxidin-3.2 shows antibacterial activity against the Gram-positive bacteria E.faecalis (MIC=100 uM) and L.lactis (MIC=500 uM). No antibacterial activity against the Gram-positive bacteria B.cereus, L.innocua, M.luteus, S.epidermidis, S.uberis and S.aureus, or the Gram-negative bacteria E.cloacae and E.coli. The protein is Preprofallaxidin-8 of Litoria fallax (Eastern dwarf tree frog).